The sequence spans 492 residues: Protein PAIR1 (492 aa).

Positions 166–186 (VDSVQSDVMQLNRAMKEASLD) form a coiled coil. The Nuclear localization signal signature appears at 479 to 483 (KRRRR).

As to quaternary structure, interacts with CRC1. In terms of tissue distribution, expressed in reproductive organs, but not in vegetative organs.

It localises to the nucleus. In terms of biological role, involved in spore formation. Plays an essential role in the establishment of homologous chromosome pairing in early meiosis. The polypeptide is Protein PAIR1 (PAIR1) (Oryza sativa subsp. japonica (Rice)).